The chain runs to 974 residues: ATP-dependent RNA helicase glh-2 (974 aa).

The tract at residues 212–435 (HESGFGGGKS…SGFGGGNDGG (224 aa)) is disordered. The segment covering 215–250 (GFGGGKSGGFGGGNSGGSGFGSGGNSNGFGSGGGGQ) has biased composition (gly residues). Over residues 256 to 267 (NNNCFNCQQPGH) the composition is skewed to polar residues. 2 consecutive CCHC-type zinc fingers follow at residues 257–274 (NNCF…DCPE) and 282–299 (RVCY…DCPE). Composition is skewed to basic and acidic residues over residues 268–282 (RSND…REPR) and 293–307 (NSRD…REGR). Residues 309–364 (GFTGGSSGFGGGNGGGTGFDSGLTNGFGSGNNGESGFGSGGFGGNSNGFGSGGGGQ) are compositionally biased toward gly residues. Residues 370–381 (NNNCFNCQQPGH) show a composition bias toward polar residues. CCHC-type zinc fingers lie at residues 371–388 (NNCF…DCPE) and 396–413 (RVCY…DCPE). Basic and acidic residues-rich tracts occupy residues 382 to 396 (RSND…REPR) and 407 to 421 (NSRD…REGR). Residues 426 to 435 (SGFGGGNDGG) show a composition bias toward gly residues. CCHC-type zinc fingers lie at residues 453 to 470 (MKCF…ECPE) and 473 to 490 (RGCF…ECPN). The Q motif motif lies at 552-580 (KTFSEANLGETMKKNVAHAGYTKTTPIQQ). The Helicase ATP-binding domain maps to 583-767 (LPLIHQGHDI…RNHLKEGYIM (185 aa)). Residue 596-603 (AQTGSGKT) participates in ATP binding. The DEAD box motif lies at 710 to 713 (DEAD). One can recognise a Helicase C-terminal domain in the interval 803-950 (DIDSYTTEKN…LVPEWMQGAS (148 aa)).

Belongs to the DEAD box helicase family. DDX4/VASA subfamily. Interacts (via C-terminus) with kgb-1.

It carries out the reaction ATP + H2O = ADP + phosphate + H(+). Probable ATP-binding RNA helicase. This is ATP-dependent RNA helicase glh-2 (glh-2) from Caenorhabditis elegans.